The primary structure comprises 243 residues: 3-deoxy-manno-octulosonate cytidylyltransferase (243 aa).

Belongs to the KdsB family.

The protein localises to the cytoplasm. It carries out the reaction 3-deoxy-alpha-D-manno-oct-2-ulosonate + CTP = CMP-3-deoxy-beta-D-manno-octulosonate + diphosphate. It participates in nucleotide-sugar biosynthesis; CMP-3-deoxy-D-manno-octulosonate biosynthesis; CMP-3-deoxy-D-manno-octulosonate from 3-deoxy-D-manno-octulosonate and CTP: step 1/1. The protein operates within bacterial outer membrane biogenesis; lipopolysaccharide biosynthesis. Functionally, activates KDO (a required 8-carbon sugar) for incorporation into bacterial lipopolysaccharide in Gram-negative bacteria. The protein is 3-deoxy-manno-octulosonate cytidylyltransferase of Helicobacter pylori (strain J99 / ATCC 700824) (Campylobacter pylori J99).